We begin with the raw amino-acid sequence, 122 residues long: Large ribosomal subunit protein uL14 (122 aa).

Belongs to the universal ribosomal protein uL14 family. As to quaternary structure, part of the 50S ribosomal subunit. Forms a cluster with proteins L3 and L19. In the 70S ribosome, L14 and L19 interact and together make contacts with the 16S rRNA in bridges B5 and B8.

Its function is as follows. Binds to 23S rRNA. Forms part of two intersubunit bridges in the 70S ribosome. The protein is Large ribosomal subunit protein uL14 of Chlorobium phaeobacteroides (strain DSM 266 / SMG 266 / 2430).